A 408-amino-acid chain; its full sequence is Dual-specificity RNA methyltransferase RlmN (408 aa).

Glutamate 126 acts as the Proton acceptor in catalysis. Residues 132 to 373 enclose the Radical SAM core domain; it reads EEGRGTLCLS…NQAGYASPIR (242 aa). A disulfide bridge connects residues cysteine 139 and cysteine 384. Cysteine 146, cysteine 150, and cysteine 153 together coordinate [4Fe-4S] cluster. Residues 210-211, serine 242, 264-266, and asparagine 341 contribute to the S-adenosyl-L-methionine site; these read GE and SLH. Residue cysteine 384 is the S-methylcysteine intermediate of the active site.

Belongs to the radical SAM superfamily. RlmN family. [4Fe-4S] cluster serves as cofactor.

The protein localises to the cytoplasm. The enzyme catalyses adenosine(2503) in 23S rRNA + 2 reduced [2Fe-2S]-[ferredoxin] + 2 S-adenosyl-L-methionine = 2-methyladenosine(2503) in 23S rRNA + 5'-deoxyadenosine + L-methionine + 2 oxidized [2Fe-2S]-[ferredoxin] + S-adenosyl-L-homocysteine. The catalysed reaction is adenosine(37) in tRNA + 2 reduced [2Fe-2S]-[ferredoxin] + 2 S-adenosyl-L-methionine = 2-methyladenosine(37) in tRNA + 5'-deoxyadenosine + L-methionine + 2 oxidized [2Fe-2S]-[ferredoxin] + S-adenosyl-L-homocysteine. In terms of biological role, specifically methylates position 2 of adenine 2503 in 23S rRNA and position 2 of adenine 37 in tRNAs. m2A2503 modification seems to play a crucial role in the proofreading step occurring at the peptidyl transferase center and thus would serve to optimize ribosomal fidelity. This is Dual-specificity RNA methyltransferase RlmN from Bartonella tribocorum (strain CIP 105476 / IBS 506).